We begin with the raw amino-acid sequence, 266 residues long: Putative carbamate hydrolase RutD (266 aa).

Belongs to the AB hydrolase superfamily. Hydrolase RutD family.

It carries out the reaction carbamate + 2 H(+) = NH4(+) + CO2. Involved in pyrimidine catabolism. May facilitate the hydrolysis of carbamate, a reaction that can also occur spontaneously. The polypeptide is Putative carbamate hydrolase RutD (Escherichia coli O45:K1 (strain S88 / ExPEC)).